Here is a 435-residue protein sequence, read N- to C-terminus: UDP-N-acetylmuramate--L-alanine ligase (435 aa).

108 to 114 (GSHGKTS) lines the ATP pocket.

The protein belongs to the MurCDEF family.

The protein resides in the cytoplasm. The enzyme catalyses UDP-N-acetyl-alpha-D-muramate + L-alanine + ATP = UDP-N-acetyl-alpha-D-muramoyl-L-alanine + ADP + phosphate + H(+). It participates in cell wall biogenesis; peptidoglycan biosynthesis. Cell wall formation. The polypeptide is UDP-N-acetylmuramate--L-alanine ligase (Exiguobacterium sp. (strain ATCC BAA-1283 / AT1b)).